We begin with the raw amino-acid sequence, 184 residues long: Ribosome maturation factor RimM (184 aa).

The 80-residue stretch at 105-184 (EDEFYWRELF…RIEVDWDPAF (80 aa)) folds into the PRC barrel domain.

The protein belongs to the RimM family. As to quaternary structure, binds ribosomal protein uS19.

Its subcellular location is the cytoplasm. An accessory protein needed during the final step in the assembly of 30S ribosomal subunit, possibly for assembly of the head region. Essential for efficient processing of 16S rRNA. May be needed both before and after RbfA during the maturation of 16S rRNA. It has affinity for free ribosomal 30S subunits but not for 70S ribosomes. The sequence is that of Ribosome maturation factor RimM from Vibrio cholerae serotype O1 (strain ATCC 39541 / Classical Ogawa 395 / O395).